Consider the following 1102-residue polypeptide: DNA-directed RNA polymerase subunit beta (1102 aa).

The tract at residues L1081 to D1102 is disordered.

The protein belongs to the RNA polymerase beta chain family. In terms of assembly, in cyanobacteria the RNAP catalytic core is composed of 2 alpha, 1 beta, 1 beta', 1 gamma and 1 omega subunit. When a sigma factor is associated with the core the holoenzyme is formed, which can initiate transcription.

It carries out the reaction RNA(n) + a ribonucleoside 5'-triphosphate = RNA(n+1) + diphosphate. Its function is as follows. DNA-dependent RNA polymerase catalyzes the transcription of DNA into RNA using the four ribonucleoside triphosphates as substrates. This Trichodesmium erythraeum (strain IMS101) protein is DNA-directed RNA polymerase subunit beta.